The primary structure comprises 425 residues: Histone-binding protein RBBP4-B (425 aa).

A2 carries the N-acetylalanine modification. WD repeat units lie at residues 32–125 (YDLV…NHEG), 126–175 (EVNR…RLRG), 176–223 (HQKE…KTIF), 225–270 (GHTA…HSVD), 271–314 (AHTA…HSFE), 315–371 (SHKD…FIHG), and 372–404 (GHTA…VWQM).

It belongs to the WD repeat RBAP46/RBAP48/MSI1 family. In terms of assembly, binds directly to histone H4, probably via helix 1 of the histone fold, a region that is not accessible when histone H4 is in chromatin. Probably forms a large corepressor complex that contains ncor1, sin3a, hdac1-A and/or hdac1-B, hdac2, rbbp4-A and/or rbbp4-B and possibly rbbp7.

It is found in the nucleus. It localises to the chromosome. The protein resides in the telomere. Core histone-binding subunit that may target chromatin assembly factors, chromatin remodeling factors and histone deacetylases to their histone substrates in a manner that is regulated by nucleosomal DNA. Component of several complexes which regulate chromatin metabolism. The sequence is that of Histone-binding protein RBBP4-B (rbbp4-b) from Xenopus laevis (African clawed frog).